A 367-amino-acid polypeptide reads, in one-letter code: Putative heat shock 70 kDa protein 7 (367 aa).

Belongs to the heat shock protein 70 family.

The chain is Putative heat shock 70 kDa protein 7 (HSPA7) from Homo sapiens (Human).